The sequence spans 245 residues: Pyridoxine 5'-phosphate synthase (245 aa).

Asn-7 contacts 3-amino-2-oxopropyl phosphate. 9–10 (DH) serves as a coordination point for 1-deoxy-D-xylulose 5-phosphate. Arg-18 contacts 3-amino-2-oxopropyl phosphate. Residue His-43 is the Proton acceptor of the active site. 2 residues coordinate 1-deoxy-D-xylulose 5-phosphate: Arg-45 and His-50. The active-site Proton acceptor is Glu-70. Thr-100 contributes to the 1-deoxy-D-xylulose 5-phosphate binding site. The active-site Proton donor is His-190. Residues Gly-191 and 212–213 (GH) contribute to the 3-amino-2-oxopropyl phosphate site.

This sequence belongs to the PNP synthase family. In terms of assembly, homooctamer; tetramer of dimers.

The protein localises to the cytoplasm. It carries out the reaction 3-amino-2-oxopropyl phosphate + 1-deoxy-D-xylulose 5-phosphate = pyridoxine 5'-phosphate + phosphate + 2 H2O + H(+). Its pathway is cofactor biosynthesis; pyridoxine 5'-phosphate biosynthesis; pyridoxine 5'-phosphate from D-erythrose 4-phosphate: step 5/5. Catalyzes the complicated ring closure reaction between the two acyclic compounds 1-deoxy-D-xylulose-5-phosphate (DXP) and 3-amino-2-oxopropyl phosphate (1-amino-acetone-3-phosphate or AAP) to form pyridoxine 5'-phosphate (PNP) and inorganic phosphate. This is Pyridoxine 5'-phosphate synthase from Prochlorococcus marinus (strain MIT 9303).